A 1021-amino-acid polypeptide reads, in one-letter code: Peroxisomal ATPase PEX6 (1021 aa).

763–770 (GPPGTGKT) is an ATP binding site.

The protein belongs to the AAA ATPase family. In terms of assembly, interacts with PEX1; forming the PEX1-PEX6 AAA ATPase complex, which is composed of a heterohexamer formed by a trimer of PEX1-PEX6 dimers.

Its subcellular location is the cytoplasm. It is found in the cytosol. The protein resides in the peroxisome membrane. It catalyses the reaction ATP + H2O = ADP + phosphate + H(+). Its function is as follows. Component of the PEX1-PEX6 AAA ATPase complex, a protein dislocase complex that mediates the ATP-dependent extraction of the PEX5 receptor from peroxisomal membranes, an essential step for PEX5 recycling. Specifically recognizes PEX5 monoubiquitinated at 'Cys-6', and pulls it out of the peroxisome lumen through the PEX2-PEX10-PEX12 retrotranslocation channel. Extraction by the PEX1-PEX6 AAA ATPase complex is accompanied by unfolding of the TPR repeats and release of bound cargo from PEX5. In Eremothecium gossypii (strain ATCC 10895 / CBS 109.51 / FGSC 9923 / NRRL Y-1056) (Yeast), this protein is Peroxisomal ATPase PEX6 (PEX6).